Consider the following 516-residue polypeptide: Poly(U)-binding-splicing factor PUF60-B (516 aa).

2 consecutive RRM domains span residues 86–164 (CRVY…RPGS) and 183–261 (NRIY…KAVT). The interval 356–398 (TAPASMGTPTSAVQLHTEVKREEDSRRTAEDHSAPVGNGQDSE) is disordered. Residues 372-388 (TEVKREEDSRRTAEDHS) show a composition bias toward basic and acidic residues. The 88-residue stretch at 419 to 506 (TVMVLRNMVG…RKVVAELYDQ (88 aa)) folds into the RRM 3; atypical domain.

The protein belongs to the RRM half pint family.

It localises to the nucleus. Its function is as follows. DNA- and RNA-binding protein, involved in transcription repression and pre-mRNA splicing. The protein is Poly(U)-binding-splicing factor PUF60-B (puf60b) of Danio rerio (Zebrafish).